Reading from the N-terminus, the 301-residue chain is Acetyl-coenzyme A carboxylase carboxyl transferase subunit beta (301 aa).

Residues 25–294 (LWIKCPETGE…SAANDMNSGA (270 aa)) enclose the CoA carboxyltransferase N-terminal domain.

The protein belongs to the AccD/PCCB family. In terms of assembly, acetyl-CoA carboxylase is a heterohexamer composed of biotin carboxyl carrier protein (AccB), biotin carboxylase (AccC) and two subunits each of ACCase subunit alpha (AccA) and ACCase subunit beta (AccD).

The protein resides in the cytoplasm. The catalysed reaction is N(6)-carboxybiotinyl-L-lysyl-[protein] + acetyl-CoA = N(6)-biotinyl-L-lysyl-[protein] + malonyl-CoA. It participates in lipid metabolism; malonyl-CoA biosynthesis; malonyl-CoA from acetyl-CoA: step 1/1. Component of the acetyl coenzyme A carboxylase (ACC) complex. Biotin carboxylase (BC) catalyzes the carboxylation of biotin on its carrier protein (BCCP) and then the CO(2) group is transferred by the transcarboxylase to acetyl-CoA to form malonyl-CoA. The polypeptide is Acetyl-coenzyme A carboxylase carboxyl transferase subunit beta (Rhizobium leguminosarum bv. trifolii (strain WSM1325)).